A 126-amino-acid polypeptide reads, in one-letter code: Large ribosomal subunit protein bL17 (126 aa).

The protein belongs to the bacterial ribosomal protein bL17 family. Part of the 50S ribosomal subunit. Contacts protein L32.

This is Large ribosomal subunit protein bL17 from Rickettsia felis (strain ATCC VR-1525 / URRWXCal2) (Rickettsia azadi).